We begin with the raw amino-acid sequence, 140 residues long: Coiled-coil domain-containing protein 126 (140 aa).

Residues 1 to 26 form the signal peptide; the sequence is MFFTISRKNMSQKLSLLLLVFGLIWG. N110 and N134 each carry an N-linked (GlcNAc...) asparagine glycan. The tract at residues 120 to 140 is disordered; the sequence is TSGNLVPVTTNKRTNVSGSIR.

The protein resides in the secreted. The protein is Coiled-coil domain-containing protein 126 (CCDC126) of Homo sapiens (Human).